Consider the following 652-residue polypeptide: Vitrin (652 aa).

Positions 1–26 (MGIVVLTMKASVIEMFLVLLVTGIQS) are cleaved as a signal peptide. One can recognise an LCCL domain in the interval 40-133 (TVPQISCDVR…LSLPRWRESF (94 aa)). 2 cysteine pairs are disulfide-bonded: Cys-46-Cys-62 and Cys-66-Cys-86. Disordered regions lie at residues 137–181 (EGKP…AAQP) and 196–231 (THTTLPKPSPSAGSTASGLRPQPAGQRSKDLGEPAL). Over residues 145–158 (TYPSSLTYSSSKSP) the composition is skewed to low complexity. Over residues 196–212 (THTTLPKPSPSAGSTAS) the composition is skewed to polar residues. VWFA domains follow at residues 267–452 (DLSF…VKRV) and 469–638 (DIGF…VPKV). The N-linked (GlcNAc...) asparagine glycan is linked to Asn-494.

As to quaternary structure, binds dermatan sulfate and chondroitin sulfate.

It is found in the secreted. Its subcellular location is the extracellular space. The protein resides in the extracellular matrix. Functionally, promotes matrix assembly and cell adhesiveness. Plays a role in spinal cord formation by regulating the proliferation and differentiation of neural stem cells. The protein is Vitrin (VIT) of Bos taurus (Bovine).